A 502-amino-acid chain; its full sequence is Sulfate adenylyltransferase (502 aa).

The N-terminal stretch occupies residues 1–167 (MPSPHGGVLQ…LEAIQLPVHY (167 aa)). The catalytic stretch occupies residues 168–393 (DYPGWRKTPA…LRESNPSRPK (226 aa)). Residue Gln195 coordinates sulfate. ATP is bound by residues 195–198 (QTRN) and 289–292 (GRDH). Catalysis depends on residues Thr196, Arg197, and Asn198. Arg197 is a sulfate binding site. Ala293 contacts sulfate. Residue Val331 participates in ATP binding. The tract at residues 394-502 (QGFALVLSET…FLEDQGFFQF (109 aa)) is required for oligomerization; adenylyl-sulfate kinase-like.

This sequence belongs to the sulfate adenylyltransferase family. In terms of assembly, homohexamer. Dimer of trimers.

The protein resides in the cytoplasm. The catalysed reaction is sulfate + ATP + H(+) = adenosine 5'-phosphosulfate + diphosphate. The protein operates within sulfur metabolism; hydrogen sulfide biosynthesis; sulfite from sulfate: step 1/3. Its function is as follows. Catalyzes the first intracellular reaction of sulfate assimilation, forming adenosine-5'-phosphosulfate (APS) from inorganic sulfate and ATP. Plays an important role in sulfate activation as a component of the biosynthesis pathway of sulfur-containing amino acids. The sequence is that of Sulfate adenylyltransferase from Kluyveromyces lactis (strain ATCC 8585 / CBS 2359 / DSM 70799 / NBRC 1267 / NRRL Y-1140 / WM37) (Yeast).